The sequence spans 72 residues: Translation initiation factor IF-1 (72 aa).

In terms of domain architecture, S1-like spans 1–72; it reads MAKEDNFELE…SKGRITYRAR (72 aa).

This sequence belongs to the IF-1 family. Component of the 30S ribosomal translation pre-initiation complex which assembles on the 30S ribosome in the order IF-2 and IF-3, IF-1 and N-formylmethionyl-tRNA(fMet); mRNA recruitment can occur at any time during PIC assembly.

It localises to the cytoplasm. One of the essential components for the initiation of protein synthesis. Stabilizes the binding of IF-2 and IF-3 on the 30S subunit to which N-formylmethionyl-tRNA(fMet) subsequently binds. Helps modulate mRNA selection, yielding the 30S pre-initiation complex (PIC). Upon addition of the 50S ribosomal subunit IF-1, IF-2 and IF-3 are released leaving the mature 70S translation initiation complex. This Saccharophagus degradans (strain 2-40 / ATCC 43961 / DSM 17024) protein is Translation initiation factor IF-1.